The sequence spans 397 residues: L-cysteine desulfidase (397 aa).

The Proton acceptor role is filled by cysteine 23. Cysteine 288, cysteine 330, and cysteine 337 together coordinate [4Fe-4S] cluster.

Belongs to the L-cysteine desulfidase family. In terms of assembly, homotrimer. Requires [4Fe-4S] cluster as cofactor.

The enzyme catalyses L-cysteine + H2O = hydrogen sulfide + pyruvate + NH4(+) + H(+). Functionally, catalyzes the cleavage of L-cysteine to form 2-aminoprop-2-enoate and sulfide. The former then spontaneously hydrolyzes to pyruvate and NH(3). May be responsible for the production of sulfide required for the biosynthesis of iron-sulfur centers in this archaea. The sequence is that of L-cysteine desulfidase from Methanococcus maripaludis (strain C5 / ATCC BAA-1333).